Reading from the N-terminus, the 233-residue chain is Biosynthetic peptidoglycan transglycosylase (233 aa).

A helical transmembrane segment spans residues 7-27 (VFTWLAKLVLGLFFASILSVV).

Belongs to the glycosyltransferase 51 family.

It is found in the cell inner membrane. The catalysed reaction is [GlcNAc-(1-&gt;4)-Mur2Ac(oyl-L-Ala-gamma-D-Glu-L-Lys-D-Ala-D-Ala)](n)-di-trans,octa-cis-undecaprenyl diphosphate + beta-D-GlcNAc-(1-&gt;4)-Mur2Ac(oyl-L-Ala-gamma-D-Glu-L-Lys-D-Ala-D-Ala)-di-trans,octa-cis-undecaprenyl diphosphate = [GlcNAc-(1-&gt;4)-Mur2Ac(oyl-L-Ala-gamma-D-Glu-L-Lys-D-Ala-D-Ala)](n+1)-di-trans,octa-cis-undecaprenyl diphosphate + di-trans,octa-cis-undecaprenyl diphosphate + H(+). The protein operates within cell wall biogenesis; peptidoglycan biosynthesis. Peptidoglycan polymerase that catalyzes glycan chain elongation from lipid-linked precursors. The sequence is that of Biosynthetic peptidoglycan transglycosylase from Shewanella oneidensis (strain ATCC 700550 / JCM 31522 / CIP 106686 / LMG 19005 / NCIMB 14063 / MR-1).